We begin with the raw amino-acid sequence, 149 residues long: Nucleoside diphosphate kinase (149 aa).

Residues K9, F57, R85, T91, R102, and N112 each contribute to the ATP site. The active-site Pros-phosphohistidine intermediate is the H115.

It belongs to the NDK family. In terms of assembly, homotetramer. Mg(2+) is required as a cofactor.

The protein localises to the cytoplasm. It catalyses the reaction a 2'-deoxyribonucleoside 5'-diphosphate + ATP = a 2'-deoxyribonucleoside 5'-triphosphate + ADP. The enzyme catalyses a ribonucleoside 5'-diphosphate + ATP = a ribonucleoside 5'-triphosphate + ADP. In terms of biological role, major role in the synthesis of nucleoside triphosphates other than ATP. The ATP gamma phosphate is transferred to the NDP beta phosphate via a ping-pong mechanism, using a phosphorylated active-site intermediate. This chain is Nucleoside diphosphate kinase, found in Acaryochloris marina (strain MBIC 11017).